The following is a 289-amino-acid chain: Rhodopsin (289 aa).

The Extracellular segment spans residues 1 to 7 (YLVSPAA). A helical membrane pass occupies residues 8–32 (YAALGAYMFLLILVGFPVNFLTLYV). Residues 33 to 44 (TLDHKKLRTPLN) lie on the Cytoplasmic side of the membrane. A helical membrane pass occupies residues 45-67 (YILLNLAVADLFMVLGGFTTTMY). Residues 68-81 (TSMHGYFVLGRLGC) are Extracellular-facing. A disulfide bond links Cys-81 and Cys-158. Residues 82-104 (NLEGFFATLGGEIALWSLVVLAI) traverse the membrane as a helical segment. The short motif at 105-107 (ERW) is the 'Ionic lock' involved in activated form stabilization element. Over 105-123 (ERWIVVCKPISNFRFTEDH) the chain is Cytoplasmic. A helical transmembrane segment spans residues 124-144 (AIMGLAFSWVMALTCAVPPLV). The Extracellular segment spans residues 145 to 173 (GWSRYIPEGMQCSCGVDYYTRAEGFNTES). A helical transmembrane segment spans residues 174–195 (FVLYMFTVHFLIPLSVIFFCYG). Residues 196–223 (RLLCAVKEAAAAQQESETTQRAEKEVSR) lie on the Cytoplasmic side of the membrane. Residues 224-245 (MVVLMVIGFLVCWLPYASVAWW) traverse the membrane as a helical segment. The Extracellular portion of the chain corresponds to 246 to 257 (IFCNQGSEFGPI). The chain crosses the membrane as a helical span at residues 258 to 279 (FMTLPAFFAKTSAIYNPLIYIC). Position 267 is an N6-(retinylidene)lysine (Lys-267). The Cytoplasmic segment spans residues 280 to 289 (MNKQFRHCMI).

This sequence belongs to the G-protein coupled receptor 1 family. Opsin subfamily. Phosphorylated on some or all of the serine and threonine residues present in the C-terminal region. Post-translationally, contains one covalently linked retinal chromophore.

The protein resides in the membrane. The protein localises to the cell projection. It localises to the cilium. Its subcellular location is the photoreceptor outer segment. Its function is as follows. Photoreceptor required for image-forming vision at low light intensity. While most salt water fish species use retinal as chromophore, most freshwater fish use 3-dehydroretinal, or a mixture of retinal and 3-dehydroretinal. Light-induced isomerization of 11-cis to all-trans retinal triggers a conformational change that activates signaling via G-proteins. Subsequent receptor phosphorylation mediates displacement of the bound G-protein alpha subunit by arrestin and terminates signaling. In Procottus jeittelesii (Red sculpin), this protein is Rhodopsin (rho).